The primary structure comprises 610 residues: UvrABC system protein C (610 aa).

The region spanning 16–94 is the GIY-YIG domain; it reads SQPGVYRMYD…IKLYQPRYNV (79 aa). The region spanning 204–239 is the UVR domain; it reads DQVLTQLIARMEKASQDLAFEEAARIRDQIQAVRRV.

Belongs to the UvrC family. Interacts with UvrB in an incision complex.

Its subcellular location is the cytoplasm. In terms of biological role, the UvrABC repair system catalyzes the recognition and processing of DNA lesions. UvrC both incises the 5' and 3' sides of the lesion. The N-terminal half is responsible for the 3' incision and the C-terminal half is responsible for the 5' incision. This chain is UvrABC system protein C, found in Salmonella schwarzengrund (strain CVM19633).